The primary structure comprises 745 residues: Copper-transporting ATPase (745 aa).

Residues 1–67 enclose the HMA domain; the sequence is MKESFYIEGM…LIEKLGYSPK (67 aa). At 1-83 the chain is on the cytoplasmic side; it reads MKESFYIEGM…KKEFFSPNVK (83 aa). Cu cation is bound by residues Cys-12 and Cys-15. Residues 84-104 form a helical membrane-spanning segment; sequence LALAVIFTLFVVYLSMGAMLS. Residues 105-124 lie on the Extracellular side of the membrane; the sequence is PSLLPESLLTINHHSNFLNA. The chain crosses the membrane as a helical span at residues 125–144; the sequence is CLQLIGALIVMHLGRDFYIQ. Over 145-151 the chain is Cytoplasmic; sequence GFKALWH. A helical membrane pass occupies residues 152 to 172; that stretch reads RQPNMSSLIAIGTSAALISSL. The Extracellular portion of the chain corresponds to 173–194; the sequence is WQLYLVYTNHYTDQWSYGHYYF. Residues 195 to 215 form a helical membrane-spanning segment; the sequence is ESVCVILMFVMVGKRIENVSK. The Cytoplasmic segment spans residues 216 to 343; that stretch reads DKALDAMQAL…KAEISRLADK (128 aa). Residues 344-366 form a helical membrane-spanning segment; it reads VSSVFVPSVIAIAVLAFVVWLII. The Extracellular portion of the chain corresponds to 367–379; sequence APKPDFWWNFRTA. The chain crosses the membrane as a helical span at residues 380–397; that stretch reads LEVFVSVLVISCPCALGL. The Cytoplasmic segment spans residues 398–685; it reads ATPMSILVAN…KLSQATIKNI (288 aa). The active-site 4-aspartylphosphate intermediate is Asp-435. 2 residues coordinate Mg(2+): Asp-631 and Asp-635. The chain crosses the membrane as a helical span at residues 686 to 705; sequence KENLFWAFCYNSVFIPLACG. The Extracellular segment spans residues 706–716; it reads VLYKANIMLSP. A helical transmembrane segment spans residues 717–735; sequence AIAGLAMSLSSVSVVLNSQ. The Cytoplasmic segment spans residues 736 to 745; the sequence is RLRNFKIKDH.

The protein belongs to the cation transport ATPase (P-type) (TC 3.A.3) family. Type IB subfamily.

The protein resides in the cell membrane. The catalysed reaction is Cu(2+)(in) + ATP + H2O = Cu(2+)(out) + ADP + phosphate + H(+). Probably involved in copper export. The chain is Copper-transporting ATPase (copA) from Helicobacter pylori (strain J99 / ATCC 700824) (Campylobacter pylori J99).